A 62-amino-acid chain; its full sequence is Putative antitoxin AF_1095 (62 aa).

The protein belongs to the UPF0165 family.

Functionally, possibly the antitoxin component of a type II toxin-antitoxin (TA) system. In Archaeoglobus fulgidus (strain ATCC 49558 / DSM 4304 / JCM 9628 / NBRC 100126 / VC-16), this protein is Putative antitoxin AF_1095.